The following is a 174-amino-acid chain: Co-chaperone protein HscB homolog (174 aa).

One can recognise a J domain in the interval 2–74 (NYFDLFNVVP…LRRAEHMLSL (73 aa)).

This sequence belongs to the HscB family. Interacts with HscA and stimulates its ATPase activity.

Its function is as follows. Co-chaperone involved in the maturation of iron-sulfur cluster-containing proteins. Seems to help targeting proteins to be folded toward HscA. The protein is Co-chaperone protein HscB homolog of Shewanella frigidimarina (strain NCIMB 400).